The sequence spans 165 residues: Alanine- and arginine-rich domain-containing protein (165 aa).

Residues 136–165 (QQLKKRQDQERASKPQSPQDEEMNPECGNA) form a disordered region.

This is Alanine- and arginine-rich domain-containing protein (Aard) from Rattus norvegicus (Rat).